A 299-amino-acid polypeptide reads, in one-letter code: Foldase protein PrsA (299 aa).

The signal sequence occupies residues 1–19 (MKKWTIAASLSIGVLALSA). Residue Cys20 is the site of N-palmitoyl cysteine attachment. Cys20 carries the S-diacylglycerol cysteine lipid modification. Positions 137 to 227 (NTEIQAQHIL…HGTHIIKVND (91 aa)) constitute a PpiC domain.

It belongs to the PrsA family.

The protein localises to the cell membrane. The catalysed reaction is [protein]-peptidylproline (omega=180) = [protein]-peptidylproline (omega=0). Functionally, plays a major role in protein secretion by helping the post-translocational extracellular folding of several secreted proteins. The polypeptide is Foldase protein PrsA (Oceanobacillus iheyensis (strain DSM 14371 / CIP 107618 / JCM 11309 / KCTC 3954 / HTE831)).